A 1369-amino-acid polypeptide reads, in one-letter code: MGGKNKKHKAPAAAVVRAAVSASRAKSAEAGIAGEAQSKKPVSRPATAAAAAAGSREPRVKQGPKIYSFNSTNDSSGPANLDKSILKVVINNKLEQRIIGVINEHKKQNNDKGMISGRLTAKKLQDLYMALQAFSFKTKDIEDAMTNTLLYGGDLHSALDWLCLNLSDDALPEGFSQEFEEQQPKSRPKFQSPQIQATISPPLQPKTKTYEEDPKSKPKKEEKNMEVNMKEWILRYAEQQNEEEKNENSKSLEEEEKFDPNERYLHLAAKLLDAKEQAATFKLEKNKQGQKEAQEKIRKFQREMETLEDHPVFNPAMKISHQQNERKKPPVATEGESALNFNLFEKSAAATEEEKDKKKEPHDVRNFDYTARSWTGKSPKQFLIDWVRKNLPKSPNPSFEKVPVGRYWKCRVRVIKSEDDVLVVCPTILTEDGMQAQHLGATLALYRLVKGQSVHQLLPPTYRDVWLEWSDAEKKREELNKMETNKPRDLFIAKLLNKLKQQQQQQQQHSENKRENSEDPEESWENLVSDEDFSALSLESANVEDLEPVRNLFRKLQSTPKYQKLLKERQQLPVFKHRDSIVETLKRHRVVVVAGETGSGKSTQVPHFLLEDLLLNEWEASKCNIVCTQPRRISAVSLANRVCDELGCENGPGGRNSLCGYQIRMESRACESTRLLYCTTGVLLRKLQEDGLLSNVSHVIVDEVHERSVQSDFLLIILKEILQKRSDLHLILMSATVDSEKFSTYFTHCPILRISGRSYPVEVFHLEDIIEETGFVLEKDSEYCQKFLEEEEEVTINVTSKAGGIKKYQEYIPVQTGAHADLNPFYQKYSSRTQHAILYMNPHKINLDLILELLAYLDKSPQFRNIEGAVLIFLPGLAHIQQLYDLLSNDRRFYSERYKVIALHSILSTQDQAAAFTLPPPGVRKIVLATNIAETGITIPDVVFVIDTGRTKENKYHESSQMSSLVETFVSKASALQRQGRAGRVRDGFCFRMYTRERFEGFMDYSVPEILRVPLEELCLHIMKCNLGSPEDFLSKALDPPQLQVISNAMNLLRKIGACELNEPKLTPLGQHLAALPVNVKIGKMLIFGAIFGCLDPVATLAAVMTEKSPFTTPIGRKDEADLAKSALAMADSDHLTIYNAYLGWKKARQEGGYRSEITYCRRNFLNRTSLLTLEDVKQELIKLVKAAGFSSSTTSTSWEGNRASQTLSFQEIALLKAVLVAGLYDNVGKIIYTKSVDVTEKLACIVETAQGKAQVHPSSVNRDLQTHGWLLYQEKIRYARVYLRETTLITPFPVLLFGGDIEVQHRERLLSIDGWIYFQAPVKIAVIFKQLRVLIDSVLRKKLENPKMSLENDKILQIITELIKTENN.

2 disordered regions span residues 27–75 and 176–226; these read SAEA…TNDS and SQEF…KNME. Phosphoserine occurs at positions 71, 192, and 200. Polar residues predominate over residues 189 to 201; it reads KFQSPQIQATISP. Positions 208–226 are enriched in basic and acidic residues; the sequence is KTYEEDPKSKPKKEEKNME. Coiled-coil stretches lie at residues 222–256, 283–310, and 492–519; these read EKNMEVNMKEWILRYAEQQNEEEKNENSKSLEEEE, LEKNKQGQKEAQEKIRKFQREMETLEDH, and IAKLLNKLKQQQQQQQQHSENKRENSED. A disordered region spans residues 502-526; it reads QQQQQQQHSENKRENSEDPEESWEN. The 174-residue stretch at 582–755 folds into the Helicase ATP-binding domain; sequence VETLKRHRVV…FTHCPILRIS (174 aa). 595-602 contacts ATP; it reads GETGSGKS. Residues 702-705 carry the DEAH box motif; it reads DEVH. One can recognise a Helicase C-terminal domain in the interval 849–1026; sequence LILELLAYLD…ELCLHIMKCN (178 aa).

Belongs to the DEAD box helicase family. DEAH subfamily. As to quaternary structure, part of the 43S pre-initiation complex (PIC) that contains at least Met-tRNA, EIF1, EIF1A (EIF1AX or EIF1AY), EIF2S1, EIF2S2, EIF2S3, EIF3A, EIF3B, EIF3C, EIF3D, EIF3E, EIF3F, EIF3G, EIF3H, EIF3I, EIF3J, EIF3K, EIF3L, EIF3M, DHX29 and the 40S ribosomal subunit.

It localises to the cytoplasm. The enzyme catalyses ATP + H2O = ADP + phosphate + H(+). Its function is as follows. ATP-binding RNA helicase involved in translation initiation. Part of the 43S pre-initiation complex that is required for efficient initiation on mRNAs of higher eukaryotes with structured 5'-UTRs by promoting efficient NTPase-dependent 48S complex formation. Specifically binds to the 40S ribosome near the mRNA entrance. Does not possess a processive helicase activity. The chain is ATP-dependent RNA helicase DHX29 from Homo sapiens (Human).